Consider the following 434-residue polypeptide: MGNVIILGSQWGDEGKGKIVDLFAERFDIVARYQGGHNAGHTVFIGEKKFVLKLIPSGILRPGKKAVIGNGLVIDPAALLSEIDTLQAAGVPVMGNLFISNRAHVLFPAHRMMEKMSEGREGRVSIGTTSRGIGPCYEDKIARRGIRIADLLDTEFFRAQYASVMEEKVLIAKALGIYSELDLRAIRDEYEAFAERIRPMVCDTSVLLNDAIRSGKTVMFEGAQGTMLDIDHGTYPFVTSSSASAGGACTGTGVAPTRISGVLGVSKAYITRVGGGPFPTEAFDGAGDRIRERGKEFGAVTGRPRRCGWFDVPLLRYTANINGFDSLVITKLDVLDEFDQIPVCVSYRIGNREVVDMPPTVAEMEKVEPVYECVPGWNTSTFGISQFGELPAKAKEYLAYLENRTGVEVGCVSTGPERNQTIVRAGSRFESLIG.

Residues 12–18 (GDEGKGK) and 40–42 (GHT) each bind GTP. Asp13 functions as the Proton acceptor in the catalytic mechanism. Residues Asp13 and Gly40 each coordinate Mg(2+). IMP is bound by residues 13–16 (DEGK), 38–41 (NAGH), Thr129, Arg143, Gln224, Thr239, and Arg303. His41 functions as the Proton donor in the catalytic mechanism. 299-305 (AVTGRPR) contacts substrate. Residues Arg305, 331-333 (KLD), and 413-415 (STG) each bind GTP.

It belongs to the adenylosuccinate synthetase family. As to quaternary structure, homodimer. Requires Mg(2+) as cofactor.

It is found in the cytoplasm. The catalysed reaction is IMP + L-aspartate + GTP = N(6)-(1,2-dicarboxyethyl)-AMP + GDP + phosphate + 2 H(+). It participates in purine metabolism; AMP biosynthesis via de novo pathway; AMP from IMP: step 1/2. Functionally, plays an important role in the de novo pathway of purine nucleotide biosynthesis. Catalyzes the first committed step in the biosynthesis of AMP from IMP. The protein is Adenylosuccinate synthetase of Solibacter usitatus (strain Ellin6076).